Here is a 362-residue protein sequence, read N- to C-terminus: Protein-glutamate methylesterase/protein-glutamine glutaminase (362 aa).

In terms of domain architecture, Response regulatory spans 5 to 122 (KVLCVDDSAL…RDGMLDYSEK (118 aa)). The residue at position 56 (aspartate 56) is a 4-aspartylphosphate. The 193-residue stretch at 163 to 355 (LLSTEKLIIV…RRVMARLSSM (193 aa)) folds into the CheB-type methylesterase domain. Catalysis depends on residues serine 175, histidine 201, and aspartate 297.

The protein belongs to the CheB family. Phosphorylated by CheA. Phosphorylation of the N-terminal regulatory domain activates the methylesterase activity.

Its subcellular location is the cytoplasm. The catalysed reaction is [protein]-L-glutamate 5-O-methyl ester + H2O = L-glutamyl-[protein] + methanol + H(+). The enzyme catalyses L-glutaminyl-[protein] + H2O = L-glutamyl-[protein] + NH4(+). In terms of biological role, involved in chemotaxis. Part of a chemotaxis signal transduction system that modulates chemotaxis in response to various stimuli. Catalyzes the demethylation of specific methylglutamate residues introduced into the chemoreceptors (methyl-accepting chemotaxis proteins or MCP) by CheR. Also mediates the irreversible deamidation of specific glutamine residues to glutamic acid. The sequence is that of Protein-glutamate methylesterase/protein-glutamine glutaminase from Paraburkholderia xenovorans (strain LB400).